We begin with the raw amino-acid sequence, 277 residues long: Large ribosomal subunit protein uL2 (277 aa).

Disordered stretches follow at residues 1-23 (MAIK…DFAE), 36-58 (PLHK…GGGH), and 219-277 (TVRG…RKNK). The segment covering 8–20 (PTSNGRRGMTSSD) has biased composition (polar residues). Over residues 258-277 (KTRKKKNKSDKFIVRRRKNK) the composition is skewed to basic residues.

Belongs to the universal ribosomal protein uL2 family. In terms of assembly, part of the 50S ribosomal subunit. Forms a bridge to the 30S subunit in the 70S ribosome.

In terms of biological role, one of the primary rRNA binding proteins. Required for association of the 30S and 50S subunits to form the 70S ribosome, for tRNA binding and peptide bond formation. It has been suggested to have peptidyltransferase activity; this is somewhat controversial. Makes several contacts with the 16S rRNA in the 70S ribosome. The sequence is that of Large ribosomal subunit protein uL2 from Bacillus licheniformis (strain ATCC 14580 / DSM 13 / JCM 2505 / CCUG 7422 / NBRC 12200 / NCIMB 9375 / NCTC 10341 / NRRL NRS-1264 / Gibson 46).